The following is a 110-amino-acid chain: U1-lycotoxin-Ls1mm (110 aa).

Positions 1–20 (MKFVLLFGVLLVTLFSYSSA) are cleaved as a signal peptide. Residues 21–44 (EMLDDFDQADEDELLSLIEKEEAR) constitute a propeptide that is removed on maturation. Intrachain disulfides connect cysteine 47-cysteine 62, cysteine 54-cysteine 71, cysteine 61-cysteine 89, and cysteine 73-cysteine 87.

This sequence belongs to the neurotoxin 19 (CSTX) family. 03 subfamily. As to expression, expressed by the venom gland.

It localises to the secreted. This is U1-lycotoxin-Ls1mm from Lycosa singoriensis (Wolf spider).